Consider the following 304-residue polypeptide: Coenzyme PQQ synthesis protein B (304 aa).

This sequence belongs to the PqqB family.

It functions in the pathway cofactor biosynthesis; pyrroloquinoline quinone biosynthesis. Functionally, may be involved in the transport of PQQ or its precursor to the periplasm. In Ectopseudomonas mendocina (strain ymp) (Pseudomonas mendocina), this protein is Coenzyme PQQ synthesis protein B.